A 453-amino-acid polypeptide reads, in one-letter code: MNCRKYLLSGLAVFGLAATSAVAALSTDDYVEAAWMTTRFFGAQRSGQGPNWILDGTSNPTSFTKDSYNGKDVSGGWFDCGDHVMYGQSQGYASYVLALAYAEFTEVSTTFILVTTPTTRKPTTTPMKSGKPNKVRDLLEELRYEADFWVKAAIDGNNFVTVKGDGNADHQKWVTAGAMSKLGSGEGGEPRCITGNANDGFTSGLAAAMLAVMARVDPDTANQAKYLKAAKTAYSYAKSHKGVTNSQGFYESSWWDGRWEDGPFLAELELYRTTGENSYKTAAIDRYDNLKFSLGEGTHFMYSNVVPLSAVMAEAVFEETPHGMRKEAIGVLDLIYEEKAKDKIFQNPNGMGSGKFPVRVPSGGAFLYALSDKFNNTNEHMEMIEKNVSYLLGDNGSKKSYVVGFSKNGANAPSRPHHRGYYANEKRWRRSRRCSESSRKEQALGRYDCWRLY.

Positions 1–26 (MNCRKYLLSGLAVFGLAATSAVAALS) are cleaved as a signal peptide. Aspartate 82 (nucleophile) is an active-site residue. The tract at residues 115-126 (TTPTTRKPTTTP) is linker ('hinge') (Pro-Thr box). Histidine 417 is an active-site residue.

The protein belongs to the glycosyl hydrolase 9 (cellulase E) family. In terms of assembly, monomer.

Its subcellular location is the periplasm. The catalysed reaction is Endohydrolysis of (1-&gt;4)-beta-D-glucosidic linkages in cellulose, lichenin and cereal beta-D-glucans.. In terms of biological role, high levels of endoglucanase activity detected on acid-swollen cellulose, ball-milled cellulose, and carboxymethyl cellulose; moderate levels detected on filter paper, phosphoric acid-swollen cellulose, lichenan, and xylan. The chain is Endoglucanase A (endA) from Fibrobacter succinogenes (Bacteroides succinogenes).